The primary structure comprises 587 residues: Pyruvate kinase (587 aa).

R33 is a binding site for substrate. K(+)-binding residues include N35, S37, D67, and T68. An ATP-binding site is contributed by 35-38 (NFSH). R74 and K157 together coordinate ATP. Position 221 (K221) interacts with substrate. Residue E223 participates in Mg(2+) binding. Residues G246, D247, and T279 each contribute to the substrate site. Mg(2+) is bound at residue D247.

The protein belongs to the pyruvate kinase family. This sequence in the C-terminal section; belongs to the PEP-utilizing enzyme family. Homotetramer. The cofactor is Mg(2+). K(+) is required as a cofactor. The N-terminus is blocked.

The catalysed reaction is pyruvate + ATP = phosphoenolpyruvate + ADP + H(+). It participates in carbohydrate degradation; glycolysis; pyruvate from D-glyceraldehyde 3-phosphate: step 5/5. Its activity is regulated as follows. Exhibits homotropic positive cooperativity for PEP. Allosterically activated by ribose-5-phosphate, AMP and other nucleoside monophosphates but not by fructose-1,6-bisphosphate. Catalyzes the phosphoryl transfer from phosphoenolpyruvate (PEP) to ADP to form pyruvate and ATP. Has a broad specificity for nucleoside diphosphates and can use ADP, GDP, IDP and UDP. The polypeptide is Pyruvate kinase (pyk) (Geobacillus stearothermophilus (Bacillus stearothermophilus)).